A 464-amino-acid chain; its full sequence is Soluble pyridine nucleotide transhydrogenase (464 aa).

35–44 (DSRRQVGGNC) is a binding site for FAD.

This sequence belongs to the class-I pyridine nucleotide-disulfide oxidoreductase family. FAD is required as a cofactor.

The protein resides in the cytoplasm. The enzyme catalyses NAD(+) + NADPH = NADH + NADP(+). Functionally, conversion of NADPH, generated by peripheral catabolic pathways, to NADH, which can enter the respiratory chain for energy generation. The sequence is that of Soluble pyridine nucleotide transhydrogenase from Pseudomonas syringae pv. syringae (strain B728a).